The chain runs to 192 residues: Thymidine kinase (192 aa).

Residues 9-16 (GAMNSGKS) and 85-88 (DEVQ) each bind ATP. The active-site Proton acceptor is E86. Residues C143, C146, C181, and C184 each contribute to the Zn(2+) site.

This sequence belongs to the thymidine kinase family. Homotetramer.

The protein localises to the cytoplasm. The enzyme catalyses thymidine + ATP = dTMP + ADP + H(+). The chain is Thymidine kinase from Shouchella clausii (strain KSM-K16) (Alkalihalobacillus clausii).